Here is a 166-residue protein sequence, read N- to C-terminus: 6,7-dimethyl-8-ribityllumazine synthase (166 aa).

5-amino-6-(D-ribitylamino)uracil contacts are provided by residues phenylalanine 24, 58–60, and 82–84; these read ALE and AVV. Residue 87–88 coordinates (2S)-2-hydroxy-3-oxobutyl phosphate; that stretch reads ET. Histidine 90 serves as the catalytic Proton donor. Position 115 (asparagine 115) interacts with 5-amino-6-(D-ribitylamino)uracil. (2S)-2-hydroxy-3-oxobutyl phosphate is bound at residue arginine 129.

Belongs to the DMRL synthase family.

It carries out the reaction (2S)-2-hydroxy-3-oxobutyl phosphate + 5-amino-6-(D-ribitylamino)uracil = 6,7-dimethyl-8-(1-D-ribityl)lumazine + phosphate + 2 H2O + H(+). The protein operates within cofactor biosynthesis; riboflavin biosynthesis; riboflavin from 2-hydroxy-3-oxobutyl phosphate and 5-amino-6-(D-ribitylamino)uracil: step 1/2. Catalyzes the formation of 6,7-dimethyl-8-ribityllumazine by condensation of 5-amino-6-(D-ribitylamino)uracil with 3,4-dihydroxy-2-butanone 4-phosphate. This is the penultimate step in the biosynthesis of riboflavin. The protein is 6,7-dimethyl-8-ribityllumazine synthase of Cupriavidus necator (strain ATCC 17699 / DSM 428 / KCTC 22496 / NCIMB 10442 / H16 / Stanier 337) (Ralstonia eutropha).